A 177-amino-acid polypeptide reads, in one-letter code: Thioredoxin M-type, chloroplastic (177 aa).

The transit peptide at 1-64 (MAAFTCTSSP…SRLRRGGIIC (64 aa)) directs the protein to the chloroplast. A Thioredoxin domain is found at 65–177 (EAQDTATGIP…LATSIDKFLQ (113 aa)). Catalysis depends on nucleophile residues Cys-101 and Cys-104. Cys-101 and Cys-104 are joined by a disulfide.

The protein belongs to the thioredoxin family. Plant M-type subfamily. Forms a complex with heterodimeric ferredoxin-thioredoxin reductase (FTR) and ferredoxin.

It localises to the plastid. It is found in the chloroplast. Its function is as follows. Participates in various redox reactions through the reversible oxidation of the active center dithiol to a disulfide. The M form is known to activate NADP-malate dehydrogenase. The protein is Thioredoxin M-type, chloroplastic of Brassica napus (Rape).